The chain runs to 352 residues: Uricase (352 aa).

Residues 1-32 are disordered; it reads MFATPLRQPAAANHQTPKNSAGMDEHGKPYQY. Over residues 23-32 the composition is skewed to basic and acidic residues; sequence MDEHGKPYQY. Residues K41 and T86 each act as charge relay system in the active site. Urate contacts are provided by T86, D87, F214, R231, V279, Q280, and N306. Residue H308 is the Charge relay system of the active site. The Microbody targeting signal signature appears at 350–352; that stretch reads SHL.

Belongs to the uricase family. Malpighian tubules.

It is found in the peroxisome. It catalyses the reaction urate + O2 + H2O = 5-hydroxyisourate + H2O2. It participates in purine metabolism; urate degradation; (S)-allantoin from urate: step 1/3. Its activity is regulated as follows. Repressed by 20-hydroxyecdysone. Its function is as follows. Catalyzes the oxidation of uric acid to 5-hydroxyisourate, which is further processed to form (S)-allantoin. The sequence is that of Uricase (Uro) from Drosophila melanogaster (Fruit fly).